Here is a 146-residue protein sequence, read N- to C-terminus: Transcriptional regulator MraZ (146 aa).

SpoVT-AbrB domains follow at residues 6 to 49 and 78 to 121; these read TYDH…TEEE and THEV…DQKS.

It belongs to the MraZ family. As to quaternary structure, forms oligomers.

The protein resides in the cytoplasm. It localises to the nucleoid. In Mesoplasma florum (strain ATCC 33453 / NBRC 100688 / NCTC 11704 / L1) (Acholeplasma florum), this protein is Transcriptional regulator MraZ.